The primary structure comprises 241 residues: Methylosome subunit pICln (241 aa).

The interval 88-112 (EDKEAHMADQEEEESEDDDDDEEPI) is disordered. The segment covering 97–112 (QEEEESEDDDDDEEPI) has biased composition (acidic residues).

It belongs to the pICln (TC 1.A.47) family. As to quaternary structure, component of the methylosome, a 20S complex containing at least clns1a/picln, prmt5/skb1 and wdr77/mep50; may mediate snrpd1 and snrpd3 methylation. Forms a 6S pICln-Sm complex composed of clns1a/picln, snrpd1, snrpd2, snrpe, snrpf and snrpg; ring-like structure where clns1a/pICln mimics additional Sm proteins and which is unable to assemble into the core snRNP.

It localises to the cytoplasm. It is found in the cytosol. The protein resides in the nucleus. The protein localises to the cytoskeleton. Its function is as follows. Involved in both the assembly of spliceosomal snRNPs and the methylation of Sm proteins. Chaperone that regulates the assembly of spliceosomal U1, U2, U4 and U5 small nuclear ribonucleoproteins (snRNPs), the building blocks of the spliceosome, and thereby plays an important role in the splicing of cellular pre-mRNAs. Most spliceosomal snRNPs contain a common set of Sm proteins SNRPB, SNRPD1, SNRPD2, SNRPD3, SNRPE, SNRPF and SNRPG that assemble in a heptameric protein ring on the Sm site of the small nuclear RNA to form the core snRNP (Sm core). In the cytosol, the Sm proteins SNRPD1, SNRPD2, SNRPE, SNRPF and SNRPG are trapped in an inactive 6S pICln-Sm complex by the chaperone CLNS1A that controls the assembly of the core snRNP. Dissociation by the SMN complex of CLNS1A from the trapped Sm proteins and their transfer to an SMN-Sm complex triggers the assembly of core snRNPs and their transport to the nucleus. In Xenopus laevis (African clawed frog), this protein is Methylosome subunit pICln (clns1a).